Here is a 192-residue protein sequence, read N- to C-terminus: Ion-translocating oxidoreductase complex subunit A (192 aa).

Transmembrane regions (helical) follow at residues 5 to 25 (LLLL…FLGL), 39 to 59 (IGMS…SYLV), 65 to 85 (LPFD…AVVV), 102 to 122 (ALGI…VALL), 134 to 154 (AIYG…FSAM), and 171 to 191 (AIAM…TGLV).

Belongs to the NqrDE/RnfAE family. In terms of assembly, the complex is composed of six subunits: RnfA, RnfB, RnfC, RnfD, RnfE and RnfG.

The protein resides in the cell inner membrane. Its function is as follows. Part of a membrane-bound complex that couples electron transfer with translocation of ions across the membrane. This is Ion-translocating oxidoreductase complex subunit A from Shewanella oneidensis (strain ATCC 700550 / JCM 31522 / CIP 106686 / LMG 19005 / NCIMB 14063 / MR-1).